Consider the following 214-residue polypeptide: Superoxide dismutase [Mn/Fe] (214 aa).

The Fe(3+) site is built by H31, H79, D165, and H169. Positions 31, 79, 165, and 169 each coordinate Mn(2+).

Belongs to the iron/manganese superoxide dismutase family. It depends on Mn(2+) as a cofactor. Requires Fe(3+) as cofactor.

It catalyses the reaction 2 superoxide + 2 H(+) = H2O2 + O2. In terms of biological role, destroys superoxide anion radicals which are normally produced within the cells and which are toxic to biological systems. Catalyzes the dismutation of superoxide anion radicals into O2 and H2O2 by successive reduction and oxidation of the transition metal ion at the active site. In Aeropyrum pernix (strain ATCC 700893 / DSM 11879 / JCM 9820 / NBRC 100138 / K1), this protein is Superoxide dismutase [Mn/Fe] (sod).